Here is a 312-residue protein sequence, read N- to C-terminus: Apolipoprotein E (312 aa).

Positions 1 to 18 (MKALWAVLLATLLTGCLA) are cleaved as a signal peptide. 8 repeat units span residues 72–93 (VLMEDTMTEVKAYKKELEEQLG), 94–115 (PVAEETRARLAKEVQAAQARLG), 116–137 (ADMEDLRNRLGQYRNEVHTMLG), 138–159 (QNTEELRSRLSTHLRKMRKRLM), 160–181 (RDAEDLQKRLAVYKAGAREGAE), 182–203 (RGVSAIRERLGPLVEQGRQRTA), 204–225 (NLGAGAAQPLRDRAQALSERLR), and 226–247 (GRLEEVGNQARDRLEEMREHME). An 8 X 22 AA approximate tandem repeats region spans residues 72–247 (VLMEDTMTEV…RLEEMREHME (176 aa)). Methionine 135 is modified (methionine sulfoxide). Residues 150 to 160 (HLRKMRKRLMR) are LDL and other lipoprotein receptors binding. Residues 150–160 (HLRKMRKRLMR) form an LDL receptor binding region. Residue 154–157 (MRKR) participates in heparin binding. A lipid-binding and lipoprotein association region spans residues 202–282 (TANLGAGAAQ…SWFEPLVEDM (81 aa)). 221 to 228 (SERLRGRL) provides a ligand contact to heparin. The interval 258-312 (QQIRLQAEIFQARLKSWFEPLVEDMHRQLANLVEKIQSSVATNSVLSTSVPQENQ) is homooligomerization. Residues 270–282 (RLKSWFEPLVEDM) are specificity for association with VLDL.

It belongs to the apolipoprotein A1/A4/E family. In terms of assembly, homotetramer. May interact with ABCA1; functionally associated with ABCA1 in the biogenesis of HDLs. May interact with APP/A4 amyloid-beta peptide; the interaction is extremely stable in vitro but its physiological significance is unclear. May interact with MAPT. May interact with MAP2. In the cerebrospinal fluid, interacts with secreted SORL1. Interacts with PMEL; this allows the loading of PMEL luminal fragment on ILVs to induce fibril nucleation. In terms of processing, APOE exists as multiple glycosylated and sialylated glycoforms within cells and in plasma. The extent of glycosylation and sialylation are tissue and context specific. Glycated in plasma VLDL. Post-translationally, phosphorylated by FAM20C in the extracellular medium.

Its subcellular location is the secreted. It is found in the extracellular space. The protein localises to the extracellular matrix. The protein resides in the extracellular vesicle. It localises to the endosome. Its subcellular location is the multivesicular body. Its function is as follows. APOE is an apolipoprotein, a protein associating with lipid particles, that mainly functions in lipoprotein-mediated lipid transport between organs via the plasma and interstitial fluids. APOE is a core component of plasma lipoproteins and is involved in their production, conversion and clearance. Apolipoproteins are amphipathic molecules that interact both with lipids of the lipoprotein particle core and the aqueous environment of the plasma. As such, APOE associates with chylomicrons, chylomicron remnants, very low density lipoproteins (VLDL) and intermediate density lipoproteins (IDL) but shows a preferential binding to high-density lipoproteins (HDL). It also binds a wide range of cellular receptors including the LDL receptor/LDLR, the LDL receptor-related proteins LRP1, LRP2 and LRP8 and the very low-density lipoprotein receptor/VLDLR that mediate the cellular uptake of the APOE-containing lipoprotein particles. Finally, APOE also has a heparin-binding activity and binds heparan-sulfate proteoglycans on the surface of cells, a property that supports the capture and the receptor-mediated uptake of APOE-containing lipoproteins by cells. A main function of APOE is to mediate lipoprotein clearance through the uptake of chylomicrons, VLDLs, and HDLs by hepatocytes. APOE is also involved in the biosynthesis by the liver of VLDLs as well as their uptake by peripheral tissues ensuring the delivery of triglycerides and energy storage in muscle, heart and adipose tissues. By participating in the lipoprotein-mediated distribution of lipids among tissues, APOE plays a critical role in plasma and tissues lipid homeostasis. APOE is also involved in two steps of reverse cholesterol transport, the HDLs-mediated transport of cholesterol from peripheral tissues to the liver, and thereby plays an important role in cholesterol homeostasis. First, it is functionally associated with ABCA1 in the biogenesis of HDLs in tissues. Second, it is enriched in circulating HDLs and mediates their uptake by hepatocytes. APOE also plays an important role in lipid transport in the central nervous system, regulating neuron survival and sprouting. This is Apolipoprotein E (Apoe) from Arvicanthis niloticus (African grass rat).